The chain runs to 116 residues: Beta-D-galactosidase Rv1717 (116 aa).

The 68-residue stretch at 40–107 folds into the Cupin type-2 domain; that stretch reads LSVYRPGGTA…TDRQALLLVT (68 aa).

Its subcellular location is the secreted. The protein resides in the cell wall. It catalyses the reaction Hydrolysis of terminal non-reducing beta-D-galactose residues in beta-D-galactosides.. With respect to regulation, beta-galactosidase activity is activated by Mg(2+) and significantly inhibited by Ca(2+), Cd(2+), Fe(2+), Ni(2+), Cu(2+) and Zn(2+). Inhibited by EDTA. Its function is as follows. Beta-D-galactopyranosidase that specifically recognizes the beta-glycosidic bonds formed with beta-D-galactopyranose (beta-D-Gal) or N-acetylgalactosamine (beta-D-GalNAc). May target the galactoside linkages in the exopolysaccharide component of the mycobacterial extracellular polymeric substance (EPS) and help dispersal of Mtb bacteria from a deteriorating biofilm. This is Beta-D-galactosidase Rv1717 from Mycobacterium tuberculosis (strain ATCC 25618 / H37Rv).